Reading from the N-terminus, the 187-residue chain is Protein GrpE (187 aa).

The tract at residues 1–23 (MNNEKELKKEETSVENKEKKVAT) is disordered.

The protein belongs to the GrpE family. Homodimer.

It is found in the cytoplasm. Participates actively in the response to hyperosmotic and heat shock by preventing the aggregation of stress-denatured proteins, in association with DnaK and GrpE. It is the nucleotide exchange factor for DnaK and may function as a thermosensor. Unfolded proteins bind initially to DnaJ; upon interaction with the DnaJ-bound protein, DnaK hydrolyzes its bound ATP, resulting in the formation of a stable complex. GrpE releases ADP from DnaK; ATP binding to DnaK triggers the release of the substrate protein, thus completing the reaction cycle. Several rounds of ATP-dependent interactions between DnaJ, DnaK and GrpE are required for fully efficient folding. The sequence is that of Protein GrpE from Mesoplasma florum (strain ATCC 33453 / NBRC 100688 / NCTC 11704 / L1) (Acholeplasma florum).